The following is a 490-amino-acid chain: Aspartyl/glutamyl-tRNA(Asn/Gln) amidotransferase subunit B (490 aa).

This sequence belongs to the GatB/GatE family. GatB subfamily. As to quaternary structure, heterotrimer of A, B and C subunits.

The enzyme catalyses L-glutamyl-tRNA(Gln) + L-glutamine + ATP + H2O = L-glutaminyl-tRNA(Gln) + L-glutamate + ADP + phosphate + H(+). It carries out the reaction L-aspartyl-tRNA(Asn) + L-glutamine + ATP + H2O = L-asparaginyl-tRNA(Asn) + L-glutamate + ADP + phosphate + 2 H(+). Its function is as follows. Allows the formation of correctly charged Asn-tRNA(Asn) or Gln-tRNA(Gln) through the transamidation of misacylated Asp-tRNA(Asn) or Glu-tRNA(Gln) in organisms which lack either or both of asparaginyl-tRNA or glutaminyl-tRNA synthetases. The reaction takes place in the presence of glutamine and ATP through an activated phospho-Asp-tRNA(Asn) or phospho-Glu-tRNA(Gln). The chain is Aspartyl/glutamyl-tRNA(Asn/Gln) amidotransferase subunit B from Zymomonas mobilis subsp. mobilis (strain ATCC 31821 / ZM4 / CP4).